Here is a 147-residue protein sequence, read N- to C-terminus: Interleukin-4 (147 aa).

The signal sequence occupies residues 1-19 (MGLRPQLAAILLCLLACTG). N-linked (GlcNAc...) asparagine glycosylation is found at asparagine 20, asparagine 61, asparagine 90, and asparagine 117. 2 disulfides stabilise this stretch: cysteine 47/cysteine 87 and cysteine 69/cysteine 114.

This sequence belongs to the IL-4/IL-13 family.

It localises to the secreted. In terms of biological role, participates in at least several B-cell activation processes as well as of other cell types. It is a costimulator of DNA-synthesis. It induces the expression of class II MHC molecules on resting B-cells. It enhances both secretion and cell surface expression of IgE and IgG1. It also regulates the expression of the low affinity Fc receptor for IgE (CD23) on both lymphocytes and monocytes. Positively regulates IL31RA expression in macrophages. Stimulates autophagy in dendritic cells by interfering with mTORC1 signaling and through the induction of RUFY4. In Mesocricetus auratus (Golden hamster), this protein is Interleukin-4 (IL4).